Reading from the N-terminus, the 421-residue chain is NAD-specific glutamate dehydrogenase (421 aa).

Residues lysine 71 and lysine 95 each coordinate substrate. Catalysis depends on lysine 107, which acts as the Proton donor. Positions 191 and 222 each coordinate NAD(+). Serine 355 contacts substrate.

Belongs to the Glu/Leu/Phe/Val dehydrogenases family. Homohexamer.

The enzyme catalyses L-glutamate + NAD(+) + H2O = 2-oxoglutarate + NH4(+) + NADH + H(+). This chain is NAD-specific glutamate dehydrogenase (gluD), found in Clostridioides difficile (Peptoclostridium difficile).